The chain runs to 550 residues: Probable endochitinase (550 aa).

The signal sequence occupies residues 1-16; that stretch reads MLHYLATILWLAVAHA. N-linked (GlcNAc...) asparagine; by host glycans are attached at residues N146 and N172. Positions 147-547 constitute a GH18 domain; sequence KTVAAYFVEW…NAMNERVRVK (401 aa). Residue E304 is the Proton donor of the active site. N-linked (GlcNAc...) asparagine; by host glycosylation occurs at N344. The short motif at 547–550 is the Prevents secretion from ER element; it reads KDEL.

Belongs to the glycosyl hydrolase 18 family. Chitinase class II subfamily.

It is found in the host endoplasmic reticulum lumen. It catalyses the reaction Random endo-hydrolysis of N-acetyl-beta-D-glucosaminide (1-&gt;4)-beta-linkages in chitin and chitodextrins.. The sequence is that of Probable endochitinase from Orgyia pseudotsugata (Douglas-fir tussock moth).